The chain runs to 439 residues: MNLSQFEQFDLSPELLKALEKKGYSRPTAIQMEAIPAAMEESDVLGSAPTGTGKTAAFLLPALQHLLDYPRRKPGPPRILVLTPTRELAMQVAEQAEELAQFTHLNIATITGGVAYQNHGDVFNTNQDLVVATPGRLLQYIKEENFDCRSVEMLIFDEADRMLQMGFGQDAEKIAAETRWRKQTLLFSATLEGELLVDFAERLLNDPVKVDAEPSRRERKKINQWYYHADSNEHKIKLLARFIETEEVTRGIVFIRRREDARELSETLRKRGIRSAYLEGEMAQTQRNNAIDKLKSGIVTVLVATDVAARGIDIDDVSHVMNFDLPYSADTYLHRIGRTARAGKKGTAVSFVEAHDYKLLGKIKRYTEEILKARILAGLEPRTKPPKDGEVKSVSKKQKARIKEKREEKKKTEAKKKVKLRHKDTKNIGKRRKPSNSNV.

Residues 4–32 carry the Q motif motif; it reads SQFEQFDLSPELLKALEKKGYSRPTAIQM. The Helicase ATP-binding domain maps to 35-209; that stretch reads IPAAMEESDV…AERLLNDPVK (175 aa). 48-55 is a binding site for ATP; the sequence is APTGTGKT. A DEAD box motif is present at residues 157–160; sequence DEAD. Residues 237–387 form the Helicase C-terminal domain; sequence KLLARFIETE…GLEPRTKPPK (151 aa). A compositionally biased stretch (basic and acidic residues) spans 381–393; the sequence is PRTKPPKDGEVKS. A disordered region spans residues 381-439; the sequence is PRTKPPKDGEVKSVSKKQKARIKEKREEKKKTEAKKKVKLRHKDTKNIGKRRKPSNSNV. Composition is skewed to basic residues over residues 394–403 and 412–439; these read VSKKQKARIK and TEAKKKVKLRHKDTKNIGKRRKPSNSNV.

The protein belongs to the DEAD box helicase family. SrmB subfamily. In terms of assembly, interacts with the 50S ribosomal subunit.

The protein resides in the cytoplasm. The enzyme catalyses ATP + H2O = ADP + phosphate + H(+). Functionally, DEAD-box RNA helicase involved in the assembly of the 50S ribosomal subunit at low temperature. Exhibits RNA-stimulated ATP hydrolysis and RNA unwinding activity. The chain is ATP-dependent RNA helicase SrmB from Haemophilus influenzae (strain ATCC 51907 / DSM 11121 / KW20 / Rd).